Consider the following 95-residue polypeptide: Large ribosomal subunit protein bL25 (95 aa).

This sequence belongs to the bacterial ribosomal protein bL25 family. In terms of assembly, part of the 50S ribosomal subunit; part of the 5S rRNA/L5/L18/L25 subcomplex. Contacts the 5S rRNA. Binds to the 5S rRNA independently of L5 and L18.

Functionally, this is one of the proteins that binds to the 5S RNA in the ribosome where it forms part of the central protuberance. This chain is Large ribosomal subunit protein bL25, found in Shewanella frigidimarina (strain NCIMB 400).